A 1342-amino-acid polypeptide reads, in one-letter code: DNA-directed RNA polymerase subunit beta (1342 aa).

Belongs to the RNA polymerase beta chain family. In terms of assembly, the RNAP catalytic core consists of 2 alpha, 1 beta, 1 beta' and 1 omega subunit. When a sigma factor is associated with the core the holoenzyme is formed, which can initiate transcription.

The enzyme catalyses RNA(n) + a ribonucleoside 5'-triphosphate = RNA(n+1) + diphosphate. Its function is as follows. DNA-dependent RNA polymerase catalyzes the transcription of DNA into RNA using the four ribonucleoside triphosphates as substrates. In Colwellia psychrerythraea (strain 34H / ATCC BAA-681) (Vibrio psychroerythus), this protein is DNA-directed RNA polymerase subunit beta.